A 43-amino-acid polypeptide reads, in one-letter code: Protein PsbN (43 aa).

The helical transmembrane segment at 5-27 threads the bilayer; the sequence is TLVAISISCLLVSFTGYALYTAF.

Belongs to the PsbN family.

Its subcellular location is the plastid. The protein resides in the chloroplast thylakoid membrane. Functionally, may play a role in photosystem I and II biogenesis. This is Protein PsbN from Cedrus deodara (Deodar cedar).